The primary structure comprises 146 residues: Hemoglobin subunit beta (146 aa).

V1 carries the post-translational modification N-acetylvaline. The Globin domain occupies 2 to 146 (HLTGEEKTAV…VANALAHKYH (145 aa)). At T12 the chain carries Phosphothreonine. The residue at position 44 (S44) is a Phosphoserine. An N6-acetyllysine modification is found at K59. Heme b is bound at residue H63. At K82 the chain carries N6-acetyllysine. H92 is a heme b binding site. Position 93 is an S-nitrosocysteine (C93). An N6-acetyllysine modification is found at K144.

It belongs to the globin family. As to quaternary structure, heterotetramer of two alpha chains and two beta chains. As to expression, red blood cells.

In terms of biological role, involved in oxygen transport from the lung to the various peripheral tissues. The polypeptide is Hemoglobin subunit beta (HBB) (Nasua nasua (Ring-tailed coati)).